Consider the following 571-residue polypeptide: 5' exonuclease Apollo (571 aa).

2 disordered regions span residues threonine 346 to asparagine 386 and methionine 431 to aspartate 487. Composition is skewed to basic and acidic residues over residues asparagine 367–asparagine 386 and glutamate 453–proline 468. A compositionally biased stretch (polar residues) spans methionine 470–aspartate 487. The TBM signature appears at asparagine 501–glutamate 532.

It belongs to the DNA repair metallo-beta-lactamase (DRMBL) family. In terms of assembly, interacts with terf2; the interaction is direct.

The protein localises to the chromosome. The protein resides in the telomere. It is found in the nucleus. The enzyme catalyses a beta-lactam + H2O = a substituted beta-amino acid. Functionally, 5'-3' exonuclease that plays a central role in telomere maintenance and protection during S-phase. Participates in the protection of telomeres against non-homologous end-joining (NHEJ)-mediated repair, thereby ensuring that telomeres do not fuse. Plays a key role in telomeric loop (T loop) formation by being recruited by terf2 at the leading end telomeres and by processing leading-end telomeres immediately after their replication via its exonuclease activity: generates 3' single-stranded overhang at the leading end telomeres avoiding blunt leading-end telomeres that are vulnerable to end-joining reactions and expose the telomere end in a manner that activates the DNA repair pathways. Possesses beta-lactamase activity, catalyzing the hydrolysis of penicillin G and nitrocefin. Exhibits no activity towards other beta-lactam antibiotic classes including cephalosporins (cefotaxime) and carbapenems (imipenem). The polypeptide is 5' exonuclease Apollo (dclre1b) (Danio rerio (Zebrafish)).